Consider the following 293-residue polypeptide: MNSTKENPVEIIRTRNELQARVRAWKQAGETVGFVPTMGALHEGHLSLIEKAQEKVTRTVASIFVNPAQFAPGEDFDTYPRREGEDIAKLASVNCDAVYLPTVAEMYPEGSVTNVRVESLSDLLDGIYRPHFFYGVATVVARLFLHAQPDVAVFGEKDYQQLQVIRRMVRDLGFPIEIIGGATRRDADGLAQSSRNLYLSPDERRAAGAIYSAMHRAASRMALGTLPSEALKEAEGYILTAGFRKIDYVTLVDPATLQALPADTPLEDGAAARLLAAAWIGKTRLIDNISVTR.

38–45 (MGALHEGH) serves as a coordination point for ATP. His-45 acts as the Proton donor in catalysis. Gln-69 lines the (R)-pantoate pocket. Gln-69 contacts beta-alanine. ATP is bound at residue 155-158 (GEKD). Residue Gln-161 participates in (R)-pantoate binding. An ATP-binding site is contributed by 192 to 195 (QSSR).

The protein belongs to the pantothenate synthetase family. In terms of assembly, homodimer.

Its subcellular location is the cytoplasm. It catalyses the reaction (R)-pantoate + beta-alanine + ATP = (R)-pantothenate + AMP + diphosphate + H(+). Its pathway is cofactor biosynthesis; (R)-pantothenate biosynthesis; (R)-pantothenate from (R)-pantoate and beta-alanine: step 1/1. Its function is as follows. Catalyzes the condensation of pantoate with beta-alanine in an ATP-dependent reaction via a pantoyl-adenylate intermediate. The polypeptide is Pantothenate synthetase (Hyphomonas neptunium (strain ATCC 15444)).